The sequence spans 357 residues: MSPSPSVSPRRTLNNKSSYINNSGGLVLPPTQFNLNQQPVLSFQQKATFDSNQQFFYYPESPTKNLRPRFNSISQVNKGVNEDHYTGGGSSNNNRPSRYTNTMGAANTNVNSHPHHQSVSHLNSKSLKFNQTKEVSSINEIIFPSRTCTKKRYFTKPIDLYGTRSSTSVAPKLTNSPTKSKTNFNIKKCILPRSVVTTYKLPSPVHETIDDISKKIIILLISLKFEKNYHFLQPIQLSTNSKTRISKSLDELCGVQLTSTLRQQKQLQGNSKPVKNLPNSNAKQRAGASVSTNANESFELSFDGKAMDRSDIFRMVDSFSIAISDEDEEDEEEDSFQQRSANNRILPAEILSNEPLK.

Serine 72 is modified (phosphoserine). Disordered stretches follow at residues 79–98, 264–290, and 323–357; these read GVNEDHYTGGGSSNNNRPSR, QKQLQGNSKPVKNLPNSNAKQRAGASV, and ISDEDEEDEEEDSFQQRSANNRILPAEILSNEPLK. The span at 324-335 shows a compositional bias: acidic residues; it reads SDEDEEDEEEDS.

This is an uncharacterized protein from Saccharomyces cerevisiae (strain ATCC 204508 / S288c) (Baker's yeast).